We begin with the raw amino-acid sequence, 120 residues long: Glycine cleavage system H protein (120 aa).

The region spanning 17–99 (VATVGITAHA…QGAGWLYRLK (83 aa)) is the Lipoyl-binding domain. Lys58 bears the N6-lipoyllysine mark.

It belongs to the GcvH family. In terms of assembly, the glycine cleavage system is composed of four proteins: P, T, L and H. Requires (R)-lipoate as cofactor.

Functionally, the glycine cleavage system catalyzes the degradation of glycine. The H protein shuttles the methylamine group of glycine from the P protein to the T protein. The protein is Glycine cleavage system H protein of Methylorubrum populi (strain ATCC BAA-705 / NCIMB 13946 / BJ001) (Methylobacterium populi).